We begin with the raw amino-acid sequence, 821 residues long: Cell wall integrity transcriptional regulator CAS5 (821 aa).

5 disordered regions span residues 42–66 (HLQS…LNQH), 219–245 (FESP…LSTP), 305–432 (TKSN…STSQ), 544–576 (QEEE…TSSL), and 607–750 (VKQE…KHKC). Polar residues predominate over residues 222-245 (PQSHIQSQPSYSQGYHNQNSLSTP). Over residues 305 to 318 (TKSNSTSSYNSTLN) the composition is skewed to low complexity. The segment covering 319–329 (PFYTPSQQLSS) has biased composition (polar residues). The span at 372–387 (QLRKAKSYTSLLRKKK) shows a compositional bias: basic residues. Positions 396–412 (QNQQHQQQQQQQQQQQQ) are enriched in low complexity. Residues 422–432 (QNLSFPNSTSQ) are compositionally biased toward polar residues. The span at 545-561 (EEEQEHQDEQMEIDSFE) shows a compositional bias: acidic residues. Low complexity-rich tracts occupy residues 662–674 (LVNK…NNDT) and 684–693 (KNTNGNGNND). A compositionally biased stretch (acidic residues) spans 694–714 (NDNDSEENNDNVDDADDDDDG). C2H2-type zinc fingers lie at residues 748–770 (HKCP…LKSH) and 776–801 (FECQ…KKIH). Position 769 is a phosphoserine (S769).

Phosphorylation at Ser-769 and probably additional serine residues. GLC7 dephosphorylates CAS5 in response to cell wall stress which leads to its translocation to the nucleus.

Its subcellular location is the nucleus. It localises to the cytoplasm. Its function is as follows. Transcription factor that acts with ADA2 to promote cell wall integrity. Regulates the expression of target genes in concert with the transcriptional regulators SWI4 and SWI6. Crucial for proper cell cycle dynamics and responses to echinocandins, which inhibit beta-1,3-glucan synthesis. Has distinct transcriptional targets under basal and stress conditions. Also regulates a transcriptional network that influences the response to fluconazole. Plays a key role in adherence, hyphal development, and virulence. Acts as a repressor of hypha-specific genes during yeast-form growth. In Candida albicans (strain SC5314 / ATCC MYA-2876) (Yeast), this protein is Cell wall integrity transcriptional regulator CAS5.